The following is a 512-amino-acid chain: Glutathione-binding protein GsiB (512 aa).

A signal peptide spans 1-26 (MTQFITHKWLAALGLASSIAAFPALA).

This sequence belongs to the bacterial solute-binding protein 5 family. As to quaternary structure, the complex is composed of two ATP-binding proteins (GsiA), two transmembrane proteins (GsiC and GsiD) and a solute-binding protein (GsiB).

It localises to the periplasm. In terms of biological role, part of the ABC transporter complex GsiABCD involved in glutathione import. Binds glutathione. This chain is Glutathione-binding protein GsiB, found in Salmonella choleraesuis (strain SC-B67).